The sequence spans 460 residues: Oxysterols receptor LXR-beta (460 aa).

Low complexity predominate over residues Met1 to Pro14. The disordered stretch occupies residues Met1 to Ala78. The tract at residues Met1 to Glu85 is transactivation AF-1; required for ligand-independent transactivation function. Over residues Glu36–Asp45 the composition is skewed to pro residues. The segment at residues His84 to Ser161 is a DNA-binding region (nuclear receptor). 2 consecutive NR C4-type zinc fingers follow at residues Cys87 to Cys107 and Cys125 to Cys149. The interval Lys169–Gly216 is disordered. The segment covering Gln175 to Gly198 has biased composition (low complexity). The segment covering Ala199–Glu215 has biased composition (gly residues). Residues Leu219–Glu460 are transactivation AF-2; required for ligand-dependent transactivation function; mediates interaction with CCAR2. The NR LBD domain occupies Ala222–Glu460. Residues Lys409 and Lys447 each participate in a glycyl lysine isopeptide (Lys-Gly) (interchain with G-Cter in SUMO2) cross-link.

This sequence belongs to the nuclear hormone receptor family. NR1 subfamily. In terms of assembly, forms a heterodimer with RXR. Interacts with CCAR2 (via N-terminus) in a ligand-independent manner. Interacts (when sumoylated) with GPS2; interaction with GPS2 onto hepatic acute phase protein promoters prevents N-Cor corepressor complex dissociation. Interacts with ABCA12 and ABCA1; this interaction is required for ABCA1 localization to the cell surface and is necessary for its normal activity and stability. Post-translationally, sumoylated by SUMO2 at Lys-409 and Lys-447 during the hepatic acute phase response, leading to promote interaction with GPS2 and prevent N-Cor corepressor complex dissociation. In terms of tissue distribution, ubiquitous.

It localises to the nucleus. In terms of biological role, nuclear receptor that exhibits a ligand-dependent transcriptional activation activity. Binds preferentially to double-stranded oligonucleotide direct repeats having the consensus half-site sequence 5'-AGGTCA-3' and 4-nt spacing (DR-4). Regulates cholesterol uptake through MYLIP-dependent ubiquitination of LDLR, VLDLR and LRP8; DLDLR and LRP8. Interplays functionally with RORA for the regulation of genes involved in liver metabolism. Induces LPCAT3-dependent phospholipid remodeling in endoplasmic reticulum (ER) membranes of hepatocytes, driving SREBF1 processing and lipogenesis. Via LPCAT3, triggers the incorporation of arachidonate into phosphatidylcholines of ER membranes, increasing membrane dynamics and enabling triacylglycerols transfer to nascent very low-density lipoprotein (VLDL) particles. Via LPCAT3 also counteracts lipid-induced ER stress response and inflammation, likely by modulating SRC kinase membrane compartmentalization and limiting the synthesis of lipid inflammatory mediators. Plays an anti-inflammatory role during the hepatic acute phase response by acting as a corepressor: inhibits the hepatic acute phase response by preventing dissociation of the N-Cor corepressor complex. This Homo sapiens (Human) protein is Oxysterols receptor LXR-beta (NR1H2).